Here is a 492-residue protein sequence, read N- to C-terminus: FAD-containing monooxygenase EthA (492 aa).

FAD-binding positions include Ser15, Glu36, 44-47, Asp56, and Val104; that span reads TWDL. 54–56 is an NADP(+) binding site; sequence RSD. NADP(+) is bound by residues 183–189 and 207–208; these read SGATAVT and RS.

The protein belongs to the FAD-binding monooxygenase family. The cofactor is FAD.

It localises to the cell membrane. It carries out the reaction ethionamide + NADPH + O2 + H(+) = ethionamide S-oxide + NADP(+) + H2O. Its function is as follows. Monooxygenase able to convert a wide range of ketones to the corresponding esters or lactones via a Baeyer-Villiger oxidation reaction. Can act on long-chain aliphatic ketones (2-hexanone to 2-dodecanone) and on aromatic ketones (phenylacetone and benzylacetone). Is also able to catalyze enantioselective sulfoxidation of methyl-p-tolylsulfide. In vivo, likely functions as a BVMO, but the exact nature of the physiological substrate(s) remains to be established. In terms of biological role, is responsible for the activation of several thiocarbamide-containing pro-drugs, such as ethionamide (ETH), isoxyl (ISO) and thiacetazone (TAC), into reactive species. This chain is FAD-containing monooxygenase EthA (ethA), found in Mycolicibacterium smegmatis (strain ATCC 700084 / mc(2)155) (Mycobacterium smegmatis).